The chain runs to 477 residues: Ribulose bisphosphate carboxylase large chain (477 aa).

The propeptide occupies 1–2 (MS). P3 carries the N-acetylproline modification. An N6,N6,N6-trimethyllysine modification is found at K14. 2 residues coordinate substrate: N123 and T173. K175 (proton acceptor) is an active-site residue. K177 contributes to the substrate binding site. Mg(2+) is bound by residues K201, D203, and E204. K201 is modified (N6-carboxylysine). The active-site Proton acceptor is the H294. R295, H327, and S379 together coordinate substrate.

This sequence belongs to the RuBisCO large chain family. Type I subfamily. In terms of assembly, heterohexadecamer of 8 large chains and 8 small chains; disulfide-linked. The disulfide link is formed within the large subunit homodimers. It depends on Mg(2+) as a cofactor. The disulfide bond which can form in the large chain dimeric partners within the hexadecamer appears to be associated with oxidative stress and protein turnover.

The protein localises to the plastid. The protein resides in the chloroplast. The catalysed reaction is 2 (2R)-3-phosphoglycerate + 2 H(+) = D-ribulose 1,5-bisphosphate + CO2 + H2O. It catalyses the reaction D-ribulose 1,5-bisphosphate + O2 = 2-phosphoglycolate + (2R)-3-phosphoglycerate + 2 H(+). RuBisCO catalyzes two reactions: the carboxylation of D-ribulose 1,5-bisphosphate, the primary event in carbon dioxide fixation, as well as the oxidative fragmentation of the pentose substrate in the photorespiration process. Both reactions occur simultaneously and in competition at the same active site. This chain is Ribulose bisphosphate carboxylase large chain, found in Manihot esculenta (Cassava).